The chain runs to 607 residues: Autophagy-related protein 22-2 (607 aa).

The disordered stretch occupies residues 1–29 (MTVAPPSPNSPAAELQQRPPRYPGEDTTP). Residues 41-61 (YGIAAEVFAVCGVGSFLPLTL) traverse the membrane as a helical segment. N-linked (GlcNAc...) asparagine glycosylation occurs at N89. Transmembrane regions (helical) follow at residues 119 to 139 (SFAM…LISF), 151 to 170 (TLLL…FVFI), and 188 to 208 (CLGS…ANDP). The interval 235–263 (SFSASDAESGPHPAAEAGSGTSSGPASPE) is disordered. Residues 247–263 (PAAEAGSGTSSGPASPE) are compositionally biased toward low complexity. Helical transmembrane passes span 274-294 (GVGL…SLLF), 307-327 (TLPL…FTMV), 379-399 (VLVF…VSGT), and 415-435 (VGLL…LWPV). The N-linked (GlcNAc...) asparagine glycan is linked to N445. The next 4 helical transmembrane spans lie at 450–470 (LCIA…IPVF), 485–507 (FPLA…SFFG), 519–541 (YALY…GMLI), and 550–570 (GFFF…IVNA). The interval 586–607 (KGHETEMSEQTEEAEGLLARGI) is disordered.

Belongs to the ATG22 family.

It localises to the vacuole membrane. Vacuolar effluxer which mediate the efflux of amino acids resulting from autophagic degradation. The release of autophagic amino acids allows the maintenance of protein synthesis and viability during nitrogen starvation. The polypeptide is Autophagy-related protein 22-2 (atg22-2) (Aspergillus oryzae (strain ATCC 42149 / RIB 40) (Yellow koji mold)).